The chain runs to 251 residues: MSGHSKWATIKHAKGAADAKRGQLFTKLSREIIFAAKQGGPSPEGNARLRLAIQKAKDSRMPSDNIERAIKKGSGELEGTTVIEMILEGYGPGGVAVLVNGMSDNRNRTVSDVRHMFSKGGGSLAESGAVSWIFEAKGVIGVETAGLDTDELSLKAIDMGAEDVNTDEGYMEIYTAMPDMEKIRQQLETQGVTIDSAEINMVPKNTVKLDEETAMQVLKLLDKLEELDDVQTVSSNADFDPEVVEKYHSQA.

It belongs to the TACO1 family.

Its subcellular location is the cytoplasm. This Dehalococcoides mccartyi (strain CBDB1) protein is Probable transcriptional regulatory protein cbdbA400.